A 187-amino-acid polypeptide reads, in one-letter code: Small ribosomal subunit protein uS5 (187 aa).

The interval 1 to 20 (MAERENRRDRRDDRSREETP) is disordered. The region spanning 22–85 (FADRLVAINR…EQAKRQMIRV (64 aa)) is the S5 DRBM domain.

This sequence belongs to the universal ribosomal protein uS5 family. In terms of assembly, part of the 30S ribosomal subunit. Contacts proteins S4 and S8.

With S4 and S12 plays an important role in translational accuracy. Functionally, located at the back of the 30S subunit body where it stabilizes the conformation of the head with respect to the body. The protein is Small ribosomal subunit protein uS5 of Cereibacter sphaeroides (strain ATCC 17029 / ATH 2.4.9) (Rhodobacter sphaeroides).